We begin with the raw amino-acid sequence, 395 residues long: Phosphatidylinositol 4-phosphate 5-kinase-like protein 1 (395 aa).

The disordered stretch occupies residues 1-25 (MATPSLRSHEIPAHSQEAGNKSISS). The region spanning 37 to 394 (ARQSRVGLFE…RLCRWAEVHT (358 aa)) is the PIPK domain.

Interacts with type I phosphatidylinositol 4-phosphate 5-kinases, including PIP5K1A and PIP5K1B. In terms of tissue distribution, highly expressed in brain and testis, relatively to heart, spleen, lung, liver, skeletal muscle and kidney.

It localises to the cytoplasm. Its subcellular location is the membrane. Functionally, may act as a scaffold to localize and regulate type I phosphatidylinositol 4-phosphate 5-kinases to specific compartments within the cell, where they generate PI(4,5)P2 for actin nucleation, signaling and scaffold protein recruitment and conversion to PI(3,4,5)P3. The polypeptide is Phosphatidylinositol 4-phosphate 5-kinase-like protein 1 (Pip5kl1) (Mus musculus (Mouse)).